The following is a 728-amino-acid chain: FYN-binding protein 2 (728 aa).

3 disordered regions span residues 17–76 (QNLD…PLQP), 250–287 (QAPE…RPPI), and 367–390 (PGKN…EKQP). Residues 42–75 (GTQSTQILANGKPLSSNHKQRTPYCSSSESQPLQ) show a composition bias toward polar residues. A compositionally biased stretch (pro residues) spans 276-285 (GPPPPKPSRP). Residues 377–390 (SAKHEDKKMKEKQP) are compositionally biased toward basic and acidic residues. Tyrosine 491 carries the post-translational modification Phosphotyrosine. Residues 521-524 (YEDV) carry the SH2-binding; to LCP2 motif. Tyrosine 587 bears the Phosphotyrosine mark. One can recognise an SH3 domain in the interval 664-724 (IVINTAVACS…LIEHLDFKHQ (61 aa)).

In terms of assembly, interacts with SKAP1, LCK and FYN. The phosphorylated form interacts with LCP2. Phosphorylation is required for its function in T-cell activation. Expressed in T-cells (at protein level). Widely expressed.

It localises to the membrane raft. Functionally, adapter protein that plays a role in T-cell receptor (TCR)-mediated activation of signaling pathways. Required for T-cell activation and integrin-mediated T-cell adhesion in response to TCR stimulation. This is FYN-binding protein 2 from Homo sapiens (Human).